We begin with the raw amino-acid sequence, 162 residues long: Flagellar assembly factor FliW (162 aa).

The protein belongs to the FliW family. In terms of assembly, interacts with translational regulator CsrA and flagellin(s).

The protein resides in the cytoplasm. Acts as an anti-CsrA protein, binds CsrA and prevents it from repressing translation of its target genes, one of which is flagellin. Binds to flagellin and participates in the assembly of the flagellum. The sequence is that of Flagellar assembly factor FliW from Alkaliphilus metalliredigens (strain QYMF).